We begin with the raw amino-acid sequence, 172 residues long: Protein-export protein SecB (172 aa).

The protein belongs to the SecB family. As to quaternary structure, homotetramer, a dimer of dimers. One homotetramer interacts with 1 SecA dimer.

It localises to the cytoplasm. One of the proteins required for the normal export of preproteins out of the cell cytoplasm. It is a molecular chaperone that binds to a subset of precursor proteins, maintaining them in a translocation-competent state. It also specifically binds to its receptor SecA. The sequence is that of Protein-export protein SecB from Dinoroseobacter shibae (strain DSM 16493 / NCIMB 14021 / DFL 12).